Consider the following 142-residue polypeptide: Large ribosomal subunit protein uL23 (142 aa).

This sequence belongs to the universal ribosomal protein uL23 family.

This protein binds to a specific region on the 26S rRNA. The protein is Large ribosomal subunit protein uL23 (RPL25) of Cyberlindnera jadinii (Torula yeast).